The sequence spans 66 residues: U8-myrmicitoxin-Tb1a (66 aa).

A signal peptide spans 1-26 (MKLSFLSLAFAVIFVMAIMYAPQVEA). Positions 27 to 50 (KASADADADADAAASADALAKASA) are excised as a propeptide.

As to expression, expressed by the venom gland.

It is found in the secreted. In terms of biological role, in vivo, this neurotoxin paralyzes about 50% of blowflies (L.caesar) one hour after intrathoracic injection, when tested at high doses (54 nmol/g). This chain is U8-myrmicitoxin-Tb1a, found in Tetramorium bicarinatum (Tramp ant).